The sequence spans 650 residues: MSTQSLYSVPADIAANALVNNEQYQKMYQESVANPEGFWGEHAKRIDWIKPFTQVKDTSYDDQNLYIKWFHDGTLNASANCLDRHLASKGDDVAIIWEGDDASEQRKVTYRELHAEVCQFANALKAEGVKRGDVVTIYMPMVVEATVAMLACARIGAVHSVVFGGFSPDSIASRVIDGKSKLLITADEGVRGGRKIPLKGNIDEALNRPDVTTVETVIVLKRTGGAVNWVEGRDKWWHQVTDGAATECAVEEMGAEDPLFLLYTSGSTGNPKGVLHTTGGYLVYASMTHEYVFDYKPGEVYWCTADVGWITGHSYMVYGPLANGATILIHEGIPNFPSPARLGEIVDRHQVNILYTAPTLIRALMAEGKQHFDNFDGKSLRIMGSVGEPINPEAWRWYHEVIGHEHCPIVDTWWQTETGGILITPLPGATDTKPGSATRPFFGVQPALVDNEGNILEGATEGNLVLLDSWPGQMRTVYGDHERFVLTYFKTFRGMYFTGDGARRDEDGYYWITGRVDDVINVSGHRLGTAEVESALVAHDLVAEAAVVGYPHDIKGQGIYAYVTLTKGTEATEELRQELRQWVRKEIGALATPDLIQWASGLPKTRSGKIMRRFLRKIAANEITNLGDASTLADPSVIDTLIESRLNRAD.

CoA contacts are provided by residues 191 to 194, Thr311, and Asn335; that span reads RGGR. ATP contacts are provided by residues 387 to 389, 411 to 416, Asp500, and Arg515; these read GEP and DTWWQT. Ser523 provides a ligand contact to CoA. Arg526 provides a ligand contact to ATP. Mg(2+) contacts are provided by Val537, His539, and Val542. Arg584 is a CoA binding site. Lys609 bears the N6-acetyllysine mark.

This sequence belongs to the ATP-dependent AMP-binding enzyme family. Requires Mg(2+) as cofactor. In terms of processing, acetylated. Deacetylation by the SIR2-homolog deacetylase activates the enzyme.

The enzyme catalyses acetate + ATP + CoA = acetyl-CoA + AMP + diphosphate. Functionally, catalyzes the conversion of acetate into acetyl-CoA (AcCoA), an essential intermediate at the junction of anabolic and catabolic pathways. AcsA undergoes a two-step reaction. In the first half reaction, AcsA combines acetate with ATP to form acetyl-adenylate (AcAMP) intermediate. In the second half reaction, it can then transfer the acetyl group from AcAMP to the sulfhydryl group of CoA, forming the product AcCoA. In Shewanella amazonensis (strain ATCC BAA-1098 / SB2B), this protein is Acetyl-coenzyme A synthetase.